A 513-amino-acid polypeptide reads, in one-letter code: Histidine ammonia-lyase (513 aa).

The segment at residues 145-147 (ASG) is a cross-link (5-imidazolinone (Ala-Gly)). Ser-146 carries the 2,3-didehydroalanine (Ser) modification.

This sequence belongs to the PAL/histidase family. Contains an active site 4-methylidene-imidazol-5-one (MIO), which is formed autocatalytically by cyclization and dehydration of residues Ala-Ser-Gly.

The protein localises to the cytoplasm. The catalysed reaction is L-histidine = trans-urocanate + NH4(+). Its pathway is amino-acid degradation; L-histidine degradation into L-glutamate; N-formimidoyl-L-glutamate from L-histidine: step 1/3. The sequence is that of Histidine ammonia-lyase from Vibrio vulnificus (strain YJ016).